The sequence spans 141 residues: Hemoglobin subunit alpha-D (141 aa).

Residues 1-141 (MLSADEKQLI…VSDVLAEKYR (141 aa)) form the Globin domain. 2 residues coordinate heme b: His-58 and His-87.

The protein belongs to the globin family. Heterotetramer of two alpha-D chains and two beta chains. In terms of tissue distribution, red blood cells.

Functionally, involved in oxygen transport from the lung to the various peripheral tissues. This Phrynops hilarii (Snake-necked turtle) protein is Hemoglobin subunit alpha-D (HBAD).